A 311-amino-acid chain; its full sequence is Protein N-terminal asparagine amidohydrolase (311 aa).

Monomer.

It is found in the cytoplasm. It catalyses the reaction N-terminal L-asparaginyl-[protein] + H2O + H(+) = N-terminal L-aspartyl-[protein] + NH4(+). In terms of biological role, N-terminal asparagine deamidase that mediates deamidation of N-terminal asparagine residues to aspartate. Required for the ubiquitin-dependent turnover of intracellular proteins that initiate with Met-Asn. These proteins are acetylated on the retained initiator methionine and can subsequently be modified by the removal of N-acetyl methionine by acylaminoacid hydrolase (AAH). Conversion of the resulting N-terminal asparagine to aspartate by NTAN1/PNAD renders the protein susceptible to arginylation, polyubiquitination and degradation as specified by the N-end rule. This enzyme does not act on substrates with internal or C-terminal asparagines and does not act on glutamine residues in any position. This chain is Protein N-terminal asparagine amidohydrolase (NTAN1), found in Sus scrofa (Pig).